The sequence spans 221 residues: Putative adhesin P1-like protein MPN_131 (221 aa).

Over residues 13 to 36 the composition is skewed to low complexity; sequence RYGNNHRGSNSSTSGVTTQGQSQN. 2 disordered regions span residues 13–51 and 90–183; these read RYGNNHRGSNSSTSGVTTQGQSQNASSNEPAPTFSNVGV and GWRN…TPSG. The segment covering 37–48 has biased composition (polar residues); that stretch reads ASSNEPAPTFSN. Residues 130–139 are compositionally biased toward basic and acidic residues; sequence LKQDKADKSG. 2 stretches are compositionally biased toward polar residues: residues 149 to 160 and 174 to 183; these read SGDNLTNYTNLP and HSPTRTTPSG.

This sequence belongs to the adhesin P1 family.

This is Putative adhesin P1-like protein MPN_131 from Mycoplasma pneumoniae (strain ATCC 29342 / M129 / Subtype 1) (Mycoplasmoides pneumoniae).